The following is a 200-amino-acid chain: Serine/threonine-protein kinase mos (200 aa).

In terms of domain architecture, Protein kinase spans 2–200 (LCLLQPLGSG…ELLKGERVTA (199 aa)). Residues 8–16 (LGSGGFGSV) and Lys-29 contribute to the ATP site. Asp-143 serves as the catalytic Proton acceptor.

This sequence belongs to the protein kinase superfamily. Ser/Thr protein kinase family.

The enzyme catalyses L-seryl-[protein] + ATP = O-phospho-L-seryl-[protein] + ADP + H(+). It catalyses the reaction L-threonyl-[protein] + ATP = O-phospho-L-threonyl-[protein] + ADP + H(+). The polypeptide is Serine/threonine-protein kinase mos (MOS) (Apteryx australis (Southern brown kiwi)).